The chain runs to 260 residues: Cytosolic Fe-S cluster assembly factor Nubp2 homolog 1 (260 aa).

ATP is bound at residue 14 to 21 (GKGGVGKS). The [4Fe-4S] cluster site is built by Cys188 and Cys191.

It belongs to the Mrp/NBP35 ATP-binding proteins family. NUBP2/CFD1 subfamily. As to quaternary structure, heterotetramer of 2 Nubp1 and 2 Nubp2 chains. [4Fe-4S] cluster is required as a cofactor.

It is found in the cytoplasm. Functionally, component of the cytosolic iron-sulfur (Fe/S) protein assembly (CIA) machinery. Required for maturation of extramitochondrial Fe-S proteins. The Nubp1-Nubp2 heterotetramer forms a Fe-S scaffold complex, mediating the de novo assembly of an Fe-S cluster and its transfer to target apoproteins. The polypeptide is Cytosolic Fe-S cluster assembly factor Nubp2 homolog 1 (Drosophila yakuba (Fruit fly)).